The chain runs to 608 residues: Probable methyltransferase PMT3 (608 aa).

Topologically, residues 1–12 are cytoplasmic; that stretch reads MKGRSDGGQKKR. The helical; Signal-anchor for type II membrane protein transmembrane segment at 13 to 33 threads the bilayer; it reads VIALVCVAAVVLVFVYLFYGS. Over 34–608 the chain is Lumenal; it reads SDHRASAIEY…LTSESLRDME (575 aa). Residue asparagine 342 is glycosylated (N-linked (GlcNAc...) asparagine).

Belongs to the methyltransferase superfamily.

The protein localises to the golgi apparatus membrane. This Arabidopsis thaliana (Mouse-ear cress) protein is Probable methyltransferase PMT3.